Consider the following 320-residue polypeptide: L-lactate dehydrogenase A (320 aa).

Positions 88, 120, and 151 each coordinate substrate. N120 is a binding site for NAD(+). Catalysis depends on H175, which acts as the Proton acceptor.

Belongs to the LDH/MDH superfamily. LDH family. In terms of assembly, homotetramer.

The protein resides in the cytoplasm. It catalyses the reaction (S)-lactate + NAD(+) = pyruvate + NADH + H(+). It functions in the pathway fermentation; pyruvate fermentation to lactate; (S)-lactate from pyruvate: step 1/1. Its function is as follows. Converts pyruvate to lactate. In Rhizopus oryzae (Mucormycosis agent), this protein is L-lactate dehydrogenase A (LDHA).